The following is a 251-amino-acid chain: Triosephosphate isomerase (251 aa).

Substrate is bound at residue 9 to 11 (NWK). Catalysis depends on His-96, which acts as the Electrophile. The active-site Proton acceptor is Glu-167. Substrate-binding positions include Gly-173, Ser-213, and 234-235 (GG).

Belongs to the triosephosphate isomerase family. As to quaternary structure, homodimer.

Its subcellular location is the cytoplasm. It carries out the reaction D-glyceraldehyde 3-phosphate = dihydroxyacetone phosphate. It functions in the pathway carbohydrate biosynthesis; gluconeogenesis. The protein operates within carbohydrate degradation; glycolysis; D-glyceraldehyde 3-phosphate from glycerone phosphate: step 1/1. Its function is as follows. Involved in the gluconeogenesis. Catalyzes stereospecifically the conversion of dihydroxyacetone phosphate (DHAP) to D-glyceraldehyde-3-phosphate (G3P). The protein is Triosephosphate isomerase of Phocaeicola vulgatus (strain ATCC 8482 / DSM 1447 / JCM 5826 / CCUG 4940 / NBRC 14291 / NCTC 11154) (Bacteroides vulgatus).